The sequence spans 471 residues: MTHTSENQAGFRVKIQRFGSYLSGMIMPNIGAFIAWGIITALFIPTGWLPNETFAKLVGPMITYLLPLLIGYTGGKMIYDVRGGVVGATATMGVIVGSDIPMFLGAMIMGPLGGYLIKKFDQQIQGKVKQGFEMLVNNFSAGIIGGLLTLAAFKGVGPVVSAISKTLAAGVEKIVDLHLLPLANIFIEPGKVLFLNNAINHGILSPLGIEQAAKTGKSILFLLEPNPGPGLGILLAYWLFGKGMAKQSAPGAIIIHFLGGIHEIYFPYVLMRPILILAAIAGGVSGVLTFTIFDAGLVAVPSPGSIFALLAMTPKGNYLGVLAGVLVATAVSFFVASIFLKSAKNNEEDITKATEKMQQLKGKKSDVVAVLKNEEKVIPAKVKKIVFACDAGMGSSAMGASILRNKMQKAGLNIEVTNTAINQLPEDADIVITHQNLTDRAKEKLPKAFHISVENFLNSPKYDELIEMLKK.

Residues 1–29 (MTHTSENQAGFRVKIQRFGSYLSGMIMPN) are Cytoplasmic-facing. Residues 18-342 (FGSYLSGMIM…FFVASIFLKS (325 aa)) form the PTS EIIC type-2 domain. The helical transmembrane segment at 30-51 (IGAFIAWGIITALFIPTGWLPN) threads the bilayer. Over 52 to 55 (ETFA) the chain is Extracellular. The chain crosses the membrane as a helical span at residues 56 to 76 (KLVGPMITYLLPLLIGYTGGK). Residues 77-139 (MIYDVRGGVV…QGFEMLVNNF (63 aa)) are Cytoplasmic-facing. A helical membrane pass occupies residues 140–161 (SAGIIGGLLTLAAFKGVGPVVS). The Extracellular segment spans residues 162-170 (AISKTLAAG). A helical membrane pass occupies residues 171–191 (VEKIVDLHLLPLANIFIEPGK). The Cytoplasmic segment spans residues 192 to 278 (VLFLNNAINH…VLMRPILILA (87 aa)). The chain crosses the membrane as a helical span at residues 279-298 (AIAGGVSGVLTFTIFDAGLV). Topologically, residues 299-318 (AVPSPGSIFALLAMTPKGNY) are extracellular. Residues 319 to 340 (LGVLAGVLVATAVSFFVASIFL) traverse the membrane as a helical segment. Topologically, residues 341–471 (KSAKNNEEDI…YDELIEMLKK (131 aa)) are cytoplasmic. The region spanning 383–471 (KKIVFACDAG…YDELIEMLKK (89 aa)) is the PTS EIIB type-2 domain. Residue cysteine 389 is the Phosphocysteine intermediate; for EIIB activity of the active site. At cysteine 389 the chain carries Phosphocysteine; by EIIA.

Homodimer.

The protein localises to the cell membrane. The catalysed reaction is D-mannitol(out) + N(pros)-phospho-L-histidyl-[protein] = D-mannitol 1-phosphate(in) + L-histidyl-[protein]. The phosphoenolpyruvate-dependent sugar phosphotransferase system (sugar PTS), a major carbohydrate active transport system, catalyzes the phosphorylation of incoming sugar substrates concomitantly with their translocation across the cell membrane. The enzyme II CmtAB PTS system is involved in D-mannitol transport. In Geobacillus stearothermophilus (Bacillus stearothermophilus), this protein is PTS system mannitol-specific EIICB component.